Consider the following 635-residue polypeptide: MNDNIARKMQQTYNITYWGGGYYCANNRGNISVCPNPDVPEATLDLTELVKQVQEEHSHLRLPALFCFPQILQHRLRSINAAFHRARESYGYKGDYFLVYPIKVNQQRRVIESLINAGEPLGLEAGSKAELMAVLAHANMTSSVIVCNGYKDREYIRLALTGEKLGHKVFLVIEKMSEIKMVLEEAERLEVIPRLGVRARLASQGSGKWQASGGEKSKFGLAATQVLQLIDTLRQAGRLDSLQLLHFHLGSQMANIRDIATGVRESARFYVELHKLGVNIQYFDVGGGLGVDYEGTRSQSDCSVNYGLNEYANNVIWAIGDACDENELPHPTVITESGRALTAHHTVLISNVIGVERNEFTAITPPAEDAPRPIASLWETWEEMQTKGNSRSLREWLHDSQLDLHDVHTQYVHGMLSLTERAWAEELYLNICRHIQYDLDPSNRAHRPIIDELQERMSDKFYVNFSLFQSLPDAWGIDQLFPVLPIEGLDKPLDRRAVLLDITCDSDGIIDHYVDGDGVETTMPMPAYDPEYPPMIGFFMVGAYQEILGNMHNLFGDTAAVDVYLDEKGNLTYQLSEEGDTVADMLQYVKLNPAVLLERFRTQVKNAQLDKALQEQFLTEFESGLYGYTYLEEEE.

Lysine 103 carries the N6-(pyridoxal phosphate)lysine modification. 283–293 (FDVGGGLGVDY) serves as a coordination point for substrate.

The protein belongs to the Orn/Lys/Arg decarboxylase class-II family. SpeA subfamily. Requires Mg(2+) as cofactor. Pyridoxal 5'-phosphate serves as cofactor.

It carries out the reaction L-arginine + H(+) = agmatine + CO2. The protein operates within amine and polyamine biosynthesis; agmatine biosynthesis; agmatine from L-arginine: step 1/1. Functionally, catalyzes the biosynthesis of agmatine from arginine. The polypeptide is Biosynthetic arginine decarboxylase (Proteus mirabilis (strain HI4320)).